The sequence spans 367 residues: tRNA 2-selenouridine synthase (367 aa).

Residues 14–137 (FLNDVPLMDV…LRRFLIDSLE (124 aa)) form the Rhodanese domain. The active-site S-selanylcysteine intermediate is cysteine 97.

The protein belongs to the SelU family. In terms of assembly, monomer.

The catalysed reaction is 5-methylaminomethyl-2-thiouridine(34) in tRNA + selenophosphate + (2E)-geranyl diphosphate + H2O + H(+) = 5-methylaminomethyl-2-selenouridine(34) in tRNA + (2E)-thiogeraniol + phosphate + diphosphate. It carries out the reaction 5-methylaminomethyl-2-thiouridine(34) in tRNA + (2E)-geranyl diphosphate = 5-methylaminomethyl-S-(2E)-geranyl-thiouridine(34) in tRNA + diphosphate. It catalyses the reaction 5-methylaminomethyl-S-(2E)-geranyl-thiouridine(34) in tRNA + selenophosphate + H(+) = 5-methylaminomethyl-2-(Se-phospho)selenouridine(34) in tRNA + (2E)-thiogeraniol. The enzyme catalyses 5-methylaminomethyl-2-(Se-phospho)selenouridine(34) in tRNA + H2O = 5-methylaminomethyl-2-selenouridine(34) in tRNA + phosphate. Functionally, involved in the post-transcriptional modification of the uridine at the wobble position (U34) of tRNA(Lys), tRNA(Glu) and tRNA(Gln). Catalyzes the conversion of 2-thiouridine (S2U-RNA) to 2-selenouridine (Se2U-RNA). Acts in a two-step process involving geranylation of 2-thiouridine (S2U) to S-geranyl-2-thiouridine (geS2U) and subsequent selenation of the latter derivative to 2-selenouridine (Se2U) in the tRNA chain. The sequence is that of tRNA 2-selenouridine synthase from Marinobacter nauticus (strain ATCC 700491 / DSM 11845 / VT8) (Marinobacter aquaeolei).